Here is a 564-residue protein sequence, read N- to C-terminus: 2-succinyl-5-enolpyruvyl-6-hydroxy-3-cyclohexene-1-carboxylate synthase (564 aa).

The protein belongs to the TPP enzyme family. MenD subfamily. Homodimer. Mg(2+) serves as cofactor. It depends on Mn(2+) as a cofactor. The cofactor is thiamine diphosphate.

It catalyses the reaction isochorismate + 2-oxoglutarate + H(+) = 5-enolpyruvoyl-6-hydroxy-2-succinyl-cyclohex-3-ene-1-carboxylate + CO2. It functions in the pathway quinol/quinone metabolism; 1,4-dihydroxy-2-naphthoate biosynthesis; 1,4-dihydroxy-2-naphthoate from chorismate: step 2/7. It participates in quinol/quinone metabolism; menaquinone biosynthesis. Functionally, catalyzes the thiamine diphosphate-dependent decarboxylation of 2-oxoglutarate and the subsequent addition of the resulting succinic semialdehyde-thiamine pyrophosphate anion to isochorismate to yield 2-succinyl-5-enolpyruvyl-6-hydroxy-3-cyclohexene-1-carboxylate (SEPHCHC). This is 2-succinyl-5-enolpyruvyl-6-hydroxy-3-cyclohexene-1-carboxylate synthase from Photorhabdus laumondii subsp. laumondii (strain DSM 15139 / CIP 105565 / TT01) (Photorhabdus luminescens subsp. laumondii).